The sequence spans 169 residues: MFEQWDALCAVLFSFSIAQELKTHADIVNQKGEKIGKAELIQTNSGVLIKLEASNLPPNAELAFHIHELGKCDPPDFKSAKGHFNPFKKKHGLLNPEGPHAGDMPNIHTDDKGNVRVQVLNPFVTLKKGKKNSLFKEGGTALVIHGGPDDYKSDPAGNAGKRIACGVVK.

Positions 1-18 are cleaved as a signal peptide; that stretch reads MFEQWDALCAVLFSFSIA. Cu cation is bound by residues histidine 65, histidine 67, and histidine 83. Cysteine 72 and cysteine 165 are oxidised to a cystine. Positions 83, 91, 100, and 103 each coordinate Zn(2+). A Cu cation-binding site is contributed by histidine 145.

Belongs to the Cu-Zn superoxide dismutase family. The cofactor is Cu cation. Requires Zn(2+) as cofactor.

It carries out the reaction 2 superoxide + 2 H(+) = H2O2 + O2. Functionally, destroys radicals which are normally produced within the cells and which are toxic to biological systems. The polypeptide is Superoxide dismutase [Cu-Zn] 1 (sodC1) (Aquifex aeolicus (strain VF5)).